The chain runs to 1135 residues: APC membrane recruitment protein 1 (1135 aa).

M1 is modified (N-acetylmethionine). Disordered stretches follow at residues 1 to 115 (METQ…EGTG), 156 to 308 (AEKF…VGDP), 339 to 405 (SMTD…EDDD), 447 to 484 (GLAPGELLTPQSDQQESAPNSDEGYYDSTTPGFEDDSG), 736 to 764 (NFGGSPRRAYPTYSPPEDPEEEEVEKEGN), 921 to 948 (LQAQQEDSDEEDEEEEEGEWSRDSPLSL), and 1007 to 1135 (VPES…NLAK). Over residues 10 to 19 (QAKGAAASGS) the composition is skewed to low complexity. Positions 23–35 (QTAEKGAKNKAAE) are enriched in basic and acidic residues. Low complexity predominate over residues 36 to 50 (ATEGPTSEPSSSGPG). The segment covering 73 to 83 (FGGGRSKGSGK) has biased composition (gly residues). Composition is skewed to basic and acidic residues over residues 94–107 (KTHDGLSEAAHGPE) and 196–208 (GPERVRARPHEHV). Positions 238-248 (KVSPTPEPSPP) are enriched in pro residues. S246 is subject to Phosphoserine. Composition is skewed to basic and acidic residues over residues 253 to 262 (MACKDPEKPM) and 282 to 291 (EEPHSPETGE). A compositionally biased stretch (acidic residues) spans 373–405 (ALPDDDDEEEEEEEEVELEEEEEEVKEEEEDDD). Residues 455-466 (TPQSDQQESAPN) show a composition bias toward polar residues. Positions 926-938 (EDSDEEDEEEEEG) are enriched in acidic residues. The segment covering 1058–1069 (PSCSSSSGGFSP) has biased composition (low complexity). The segment covering 1119 to 1135 (SLATSYSSTAMNGNLAK) has biased composition (polar residues).

It belongs to the Amer family. In terms of assembly, interacts with CTNNB1, AXIN1, LRP6, KEAP1, APC and BTRC. Interacts with SCF (SKP1-CUL1-F-box protein) E3 ubiquitin-protein ligase complexes containing BTRC and/or FBXW11. Identified in the beta-catenin destruction complex containing CTNNB1, APC, AXIN1 and AXIN2. Interacts with WT1. Detected in fetal and adult kidney, brain and spleen.

It localises to the cytoplasm. The protein localises to the cell membrane. The protein resides in the nucleus. Functionally, regulator of the canonical Wnt signaling pathway. Acts by specifically binding phosphatidylinositol 4,5-bisphosphate (PtdIns(4,5)P2), translocating to the cell membrane and interacting with key regulators of the canonical Wnt signaling pathway, such as components of the beta-catenin destruction complex. Acts both as a positive and negative regulator of the Wnt signaling pathway, depending on the context: acts as a positive regulator by promoting LRP6 phosphorylation. Also acts as a negative regulator by acting as a scaffold protein for the beta-catenin destruction complex and promoting stabilization of Axin at the cell membrane. Promotes CTNNB1 ubiquitination and degradation. Involved in kidney development. The polypeptide is APC membrane recruitment protein 1 (AMER1) (Homo sapiens (Human)).